The sequence spans 454 residues: MWPLTVPPPLLLLLCSGLAGQTLFQNPEEGWQLYTSAQAPDGKCICTAVIPAQSTCSRDGRSRELRQLMEKVQNVSQSMEVLELRTYRDLQYVRGMETLMRSLDARLRAADGSLSAKSFQELKDRMTELLPLSSVLEQYKADTRTIVRLREEVRNLSGSLAAIQEEMGAYGYEDLQQRVMALEARLHACAQKLGCGKLTGVSNPITVRAMGSRFGSWMTDTMAPSADSRVWYMDGYYKGRRVLEFRTLGDFIKGQNFIQHLLPQPWAGTGHVVYNGSLFYNKYQSNVVVKYHFRSRSVLVQRSLPGAGYNNTFPYSWGGFSDMDFMVDESGLWAVYTTNQNAGNIVVSRLDPHTLEVMRSWDTGYPKRSAGEAFMICGVLYVTNSHLAGAKVYFAYFTNTSSYEYTDVPFHNQYSHISMLDYNPRERALYTWNNGHQVLYNVTLFHVISTSGDP.

Residues 1–20 (MWPLTVPPPLLLLLCSGLAG) form the signal peptide. Coiled-coil stretches lie at residues 58–85 (RDGR…LELR) and 136–193 (LEQY…AQKL). 6 N-linked (GlcNAc...) asparagine glycosylation sites follow: Asn74, Asn155, Asn275, Asn310, Asn399, and Asn441. Positions 194–446 (GCGKLTGVSN…QVLYNVTLFH (253 aa)) constitute an Olfactomedin-like domain. Cys195 and Cys377 are oxidised to a cystine.

As to quaternary structure, peripherally associated with AMPAR complex. AMPAR complex consists of an inner core made of 4 pore-forming GluA/GRIA proteins (GRIA1, GRIA2, GRIA3 and GRIA4) and 4 major auxiliary subunits arranged in a twofold symmetry. One of the two pairs of distinct binding sites is occupied either by CNIH2, CNIH3 or CACNG2, CACNG3. The other harbors CACNG2, CACNG3, CACNG4, CACNG8 or GSG1L. This inner core of AMPAR complex is complemented by outer core constituents binding directly to the GluA/GRIA proteins at sites distinct from the interaction sites of the inner core constituents. Outer core constituents include at least PRRT1, PRRT2, CKAMP44/SHISA9, FRRS1L and NRN1. The proteins of the inner and outer core serve as a platform for other, more peripherally associated AMPAR constituents, including OLFM2. Alone or in combination, these auxiliary subunits control the gating and pharmacology of the AMPAR complex and profoundly impact their biogenesis and protein processing. Interacts with GRIA2. Interacts with OLFM1 and OLFM3. Interacts with SRF; the interaction promotes dissociation of SRF from the transcriptional repressor HEY2. Interacts with RUNX2. Post-translationally, N-glycosylated. In terms of tissue distribution, expressed in aortic smooth muscle (at protein level). In the fetus, expressed in the brain and ocular tissues including lens vesicle and optic cup.

Its subcellular location is the secreted. The protein localises to the synapse. The protein resides in the membrane. It is found in the nucleus. It localises to the cytoplasm. Functionally, involved in transforming growth factor beta (TGF-beta)-induced smooth muscle differentiation. TGF-beta induces expression and translocation of OLFM2 to the nucleus where it binds to SRF, causing its dissociation from the transcriptional repressor HEY2/HERP1 and facilitating binding of SRF to target genes. Plays a role in AMPAR complex organization. Is a regulator of vascular smooth-muscle cell (SMC) phenotypic switching, that acts by promoting RUNX2 and inhibiting MYOCD binding to SRF. SMC phenotypic switching is the process through which vascular SMCs undergo transition between a quiescent contractile phenotype and a proliferative synthetic phenotype in response to pathological stimuli. SMC phenotypic plasticity is essential for vascular development and remodeling. The protein is Noelin-2 (OLFM2) of Homo sapiens (Human).